The primary structure comprises 294 residues: NAD kinase (294 aa).

Residue Asp-74 is the Proton acceptor of the active site. NAD(+) is bound by residues 74-75, 148-149, Arg-159, Arg-176, Asp-178, 189-194, and Gln-247; these read DG, ND, and TAYALS.

The protein belongs to the NAD kinase family. It depends on a divalent metal cation as a cofactor.

It is found in the cytoplasm. The enzyme catalyses NAD(+) + ATP = ADP + NADP(+) + H(+). In terms of biological role, involved in the regulation of the intracellular balance of NAD and NADP, and is a key enzyme in the biosynthesis of NADP. Catalyzes specifically the phosphorylation on 2'-hydroxyl of the adenosine moiety of NAD to yield NADP. The chain is NAD kinase from Azoarcus sp. (strain BH72).